Consider the following 415-residue polypeptide: Histidine--tRNA ligase (415 aa).

Belongs to the class-II aminoacyl-tRNA synthetase family. Homodimer.

It localises to the cytoplasm. The enzyme catalyses tRNA(His) + L-histidine + ATP = L-histidyl-tRNA(His) + AMP + diphosphate + H(+). This Gluconacetobacter diazotrophicus (strain ATCC 49037 / DSM 5601 / CCUG 37298 / CIP 103539 / LMG 7603 / PAl5) protein is Histidine--tRNA ligase.